We begin with the raw amino-acid sequence, 526 residues long: ATP synthase subunit alpha (526 aa).

171–178 (GDRQTGKT) lines the ATP pocket.

It belongs to the ATPase alpha/beta chains family. F-type ATPases have 2 components, CF(1) - the catalytic core - and CF(0) - the membrane proton channel. CF(1) has five subunits: alpha(3), beta(3), gamma(1), delta(1), epsilon(1). CF(0) has three main subunits: a(1), b(2) and c(9-12). The alpha and beta chains form an alternating ring which encloses part of the gamma chain. CF(1) is attached to CF(0) by a central stalk formed by the gamma and epsilon chains, while a peripheral stalk is formed by the delta and b chains.

The protein localises to the cell membrane. It catalyses the reaction ATP + H2O + 4 H(+)(in) = ADP + phosphate + 5 H(+)(out). Its function is as follows. Produces ATP from ADP in the presence of a proton gradient across the membrane. The alpha chain is a regulatory subunit. This chain is ATP synthase subunit alpha, found in Christiangramia forsetii (strain DSM 17595 / CGMCC 1.15422 / KT0803) (Gramella forsetii).